We begin with the raw amino-acid sequence, 190 residues long: HTH-type transcriptional repressor AcnR (190 aa).

An HTH tetR-type domain is found at 10-70 (SMRRQEILEG…ALAREDAARM (61 aa)). Residues 33-52 (TVRRLEETVGKSRGAIFHHF) constitute a DNA-binding region (H-T-H motif). Citrate contacts are provided by residues 79–80 (LV), Arg-130, and Asn-134. Glu-181 serves as a coordination point for Mg(2+). Arg-185 serves as a coordination point for citrate.

In terms of assembly, homodimer.

Functionally, acnR negatively controls the expression of the aconitase gene acn. This chain is HTH-type transcriptional repressor AcnR, found in Corynebacterium diphtheriae (strain ATCC 700971 / NCTC 13129 / Biotype gravis).